A 502-amino-acid chain; its full sequence is T-complex protein 11-like X-linked protein 2 (502 aa).

The disordered stretch occupies residues 1-36 (MPKTEETVLQNDPSVAENGAPEPKTPGQSQKSKSFC).

This sequence belongs to the TCP11 family.

The sequence is that of T-complex protein 11-like X-linked protein 2 from Homo sapiens (Human).